Consider the following 222-residue polypeptide: FCS-Like Zinc finger 13 (222 aa).

The segment at 149 to 192 (EFLSSCCLCKKKLQGKDIYMYKGEMGFCSAECRSVQIMNDERQE) adopts an FLZ-type zinc-finger fold.

This sequence belongs to the FLZ family. As to quaternary structure, interacts with KIN10 and KIN11 via its FLZ-type zinc finger domain. Interacts with KINB1, KINB2, KINB3 and SNF4 via its N-terminal part.

It localises to the nucleus. The protein resides in the cytoplasm. In terms of biological role, may act as an adapter to facilitate the interaction of SnRK1 complex with effector proteins, conferring tissue- and stimulus-type specific differences in the SnRK1 regulation pathway. This Arabidopsis thaliana (Mouse-ear cress) protein is FCS-Like Zinc finger 13.